Consider the following 220-residue polypeptide: MNFEDQEEDMEMSGVNPPCGYDSLSGEGATSSGGGGVGRSKGVGAKIRYRECLKNHAVNIGGHAVDGCCEFMPSGEDGTLDALKCAACGCHRNFHRKETESIGGRAHRVPTYYNRPPQPHQPPGYLHLTSPAAPYRPPAASGDEEDTSNPSSSGGTTKRFRTKFTAEQKEKMLAFAERLGWRIQKHDDVAVEQFCAETGVRRQVLKIWMHNNKNSLGKKP.

Positions 1–11 are enriched in acidic residues; that stretch reads MNFEDQEEDME. Residues 1-40 form a disordered region; sequence MNFEDQEEDMEMSGVNPPCGYDSLSGEGATSSGGGGVGRS. Residues 31–40 show a composition bias toward gly residues; it reads SSGGGGVGRS. A ZF-HD dimerization-type zinc finger spans residues 49–98; sequence YRECLKNHAVNIGGHAVDGCCEFMPSGEDGTLDALKCAACGCHRNFHRKE. Positions 100–160 are disordered; the sequence is ESIGGRAHRV…SSSGGTTKRF (61 aa). Residues 157-220 constitute a DNA-binding region (homeobox; atypical); sequence TKRFRTKFTA…NNKNSLGKKP (64 aa).

As to quaternary structure, homo or heterodimer. Interacts with ZHD1, ZHD3, ZHD4, ZHD5, ZHD6, ZHD7, ZHD8, ZHD9, ZHD10 and ZHD11. In terms of tissue distribution, mostly expressed in flowers and, to a lower extent, in inflorescence, stems and leaves.

The protein resides in the nucleus. Essential protein. Putative transcription factor. The protein is Zinc-finger homeodomain protein 2 (ZHD1) of Arabidopsis thaliana (Mouse-ear cress).